Consider the following 295-residue polypeptide: Ethanolamine ammonia-lyase small subunit (295 aa).

Residues valine 207, glutamate 228, and cysteine 258 each contribute to the adenosylcob(III)alamin site.

This sequence belongs to the EutC family. As to quaternary structure, the basic unit is a heterodimer which dimerizes to form tetramers. The heterotetramers trimerize; 6 large subunits form a core ring with 6 small subunits projecting outwards. Adenosylcob(III)alamin serves as cofactor.

Its subcellular location is the bacterial microcompartment. The enzyme catalyses ethanolamine = acetaldehyde + NH4(+). Its pathway is amine and polyamine degradation; ethanolamine degradation. Its function is as follows. Catalyzes the deamination of various vicinal amino-alcohols to oxo compounds. Allows this organism to utilize ethanolamine as the sole source of nitrogen and carbon in the presence of external vitamin B12. This Escherichia coli (strain 55989 / EAEC) protein is Ethanolamine ammonia-lyase small subunit.